The following is a 568-amino-acid chain: Pentatricopeptide repeat-containing protein At1g73400, mitochondrial (568 aa).

The transit peptide at methionine 1–cysteine 55 directs the protein to the mitochondrion. 8 PPR repeats span residues glutamate 233–arginine 263, aspartate 267–proline 301, glutamate 302–valine 336, threonine 340–proline 374, aspartate 375–proline 409, aspartate 410–proline 444, serine 445–glutamine 479, and aspartate 480–leucine 514.

Belongs to the PPR family. P subfamily.

Its subcellular location is the mitochondrion. This is Pentatricopeptide repeat-containing protein At1g73400, mitochondrial from Arabidopsis thaliana (Mouse-ear cress).